The following is a 239-amino-acid chain: Uridylate kinase (239 aa).

ATP is bound at residue lysine 10–glycine 13. The interval glycine 18 to glycine 23 is involved in allosteric activation by GTP. Glycine 52 contacts UMP. The ATP site is built by glycine 53 and arginine 57. UMP contacts are provided by residues aspartate 73 and threonine 134–threonine 141. ATP is bound by residues threonine 161, tyrosine 167, and aspartate 170.

It belongs to the UMP kinase family. Homohexamer.

The protein resides in the cytoplasm. It catalyses the reaction UMP + ATP = UDP + ADP. The protein operates within pyrimidine metabolism; CTP biosynthesis via de novo pathway; UDP from UMP (UMPK route): step 1/1. Its activity is regulated as follows. Allosterically activated by GTP. Inhibited by UTP. In terms of biological role, catalyzes the reversible phosphorylation of UMP to UDP. In Campylobacter jejuni subsp. jejuni serotype O:2 (strain ATCC 700819 / NCTC 11168), this protein is Uridylate kinase.